Reading from the N-terminus, the 479-residue chain is UDP-N-acetylmuramoylalanine--D-glutamate ligase (479 aa).

ATP is bound at residue 110–116 (GTNGKTS).

Belongs to the MurCDEF family.

The protein resides in the cytoplasm. The enzyme catalyses UDP-N-acetyl-alpha-D-muramoyl-L-alanine + D-glutamate + ATP = UDP-N-acetyl-alpha-D-muramoyl-L-alanyl-D-glutamate + ADP + phosphate + H(+). It participates in cell wall biogenesis; peptidoglycan biosynthesis. Functionally, cell wall formation. Catalyzes the addition of glutamate to the nucleotide precursor UDP-N-acetylmuramoyl-L-alanine (UMA). This chain is UDP-N-acetylmuramoylalanine--D-glutamate ligase, found in Bifidobacterium adolescentis (strain ATCC 15703 / DSM 20083 / NCTC 11814 / E194a).